The chain runs to 383 residues: Cyclin-D4-2 (383 aa).

Over residues 51–62 (AAGGGGGSGGGG) the composition is skewed to gly residues. 3 disordered regions span residues 51–70 (AAGG…EDMF), 313–335 (QPKP…PESP), and 354–383 (ATIA…KLSR). The span at 323 to 335 (SASASSSSVPESP) shows a compositional bias: low complexity.

The protein belongs to the cyclin family. Cyclin D subfamily.

The protein is Cyclin-D4-2 (CYCD4-2) of Oryza sativa subsp. japonica (Rice).